A 409-amino-acid polypeptide reads, in one-letter code: MDYSAALDQAIGKLHEEGRYRTFIDIERRKGAYPQAVWTRPDGTETRITVWCGNDYLGMGQHPVVLAAMHEALDATGAGSGGTRNISGTTVYHKRLEAELSDLHGKEAALVFSSAYIANDATLSTLRKLFPGLIIYSDELNHASMIEGIKRFDGAKRIFRHNDVAHLRELLAADDPEAPKLIAFESIYSMDGDFGPIKAICDLADEFNALTYLDEVHAVGMYGPRGGGVAERDGLSHRIDIFNGTLGKAFGVFGGYIAASARMVDAIRSYAPGFIFTTSLPPAVAAGAAASIAFLKTAEGQLLRDQQQLNARILKMRLRGLGMPIMDHGSHIVPVHVGNPVHCKALSDMLLADFGIYVQPINFPTVPRGTERLRFTPSPVHDPKQIDHLVKAMDSLWSQCKLNRSTSAA.

Residues R21, S137, and K156 each coordinate substrate. Residues S189, H217, and T245 each coordinate pyridoxal 5'-phosphate. The active site involves K248. K248 carries the N6-(pyridoxal phosphate)lysine modification. Residues T277 and T278 each coordinate pyridoxal 5'-phosphate. T365 is a substrate binding site.

This sequence belongs to the class-II pyridoxal-phosphate-dependent aminotransferase family. As to quaternary structure, homodimer. It depends on pyridoxal 5'-phosphate as a cofactor.

The catalysed reaction is succinyl-CoA + glycine + H(+) = 5-aminolevulinate + CO2 + CoA. It participates in porphyrin-containing compound metabolism; protoporphyrin-IX biosynthesis; 5-aminolevulinate from glycine: step 1/1. The chain is 5-aminolevulinate synthase (hemA) from Paracoccus denitrificans (strain Pd 1222).